The chain runs to 1002 residues: Chitin synthase II (1002 aa).

Disordered stretches follow at residues 1–165 and 178–209; these read MDRP…GRTS and LDGS…SGSQ. A compositionally biased stretch (low complexity) spans 63-78; it reads SYQPSVVSSHSRSASV. N-linked (GlcNAc...) asparagine glycosylation occurs at Asn-123. Asn-336 carries N-linked (GlcNAc...) asparagine glycosylation. The next 8 membrane-spanning stretches (helical) occupy residues 627–647, 669–689, 704–724, 740–760, 780–800, 808–828, 906–926, and 940–960; these read WLNG…QILA, LLFT…VAGG, SVIF…QFIL, SMII…YIVV, LIVS…LYLE, SLQY…YAFC, YMVV…SEIY, and ILWA…TFAI.

This sequence belongs to the chitin synthase family. Class II subfamily. As to expression, expressed in hyphal bodies.

Its subcellular location is the cell membrane. It catalyses the reaction [(1-&gt;4)-N-acetyl-beta-D-glucosaminyl](n) + UDP-N-acetyl-alpha-D-glucosamine = [(1-&gt;4)-N-acetyl-beta-D-glucosaminyl](n+1) + UDP + H(+). Functionally, polymerizes chitin, a structural polymer of the cell wall and septum, by transferring the sugar moiety of UDP-GlcNAc to the non-reducing end of the growing chitin polymer. Contributes to the production of conidia and the ability of fungal conidia to germinate. Involved in fungal stress tolerances. The chain is Chitin synthase II from Metarhizium acridum (strain CQMa 102).